Here is a 224-residue protein sequence, read N- to C-terminus: Dehydration-responsive element-binding protein 1G (224 aa).

The span at 1-16 shows a compositional bias: polar residues; the sequence is MDVSAALSSDYSSGTP. The tract at residues 1–46 is disordered; it reads MDVSAALSSDYSSGTPSPVAADADDGSSAYMTVSSAPPKRRAGRTK. Positions 54 to 111 form a DNA-binding region, AP2/ERF; it reads VFKGVRRRNPGRWVCEVREPHGKQRIWLGTFETAEMAARAHDVAALALRGRAACLNFA. 2 disordered regions span residues 139–161 and 200–224; these read AFRPPPDESNAATEVAAAASGAT and PPMAGDPAVGSGEDDNDGEVQLWSY.

The protein belongs to the AP2/ERF transcription factor family. ERF subfamily.

The protein localises to the nucleus. Functionally, transcriptional activator that binds specifically to the DNA sequence 5'-[AG]CCGAC-3'. Binding to the C-repeat/DRE element mediates high salinity- and dehydration-inducible transcription. The sequence is that of Dehydration-responsive element-binding protein 1G (DREB1G) from Oryza sativa subsp. japonica (Rice).